The chain runs to 243 residues: Collagen triple helix repeat-containing protein 1 (243 aa).

Positions 1 to 30 are cleaved as a signal peptide; it reads MRPQGPAASPQRLRGLLLLLLLQLPAPSSA. A Collagen-like domain is found at 57–90; that stretch reads QGPAGVPGRDGSPGANGIPGTPGIPGRDGFKGEK. The tract at residues 62–85 is disordered; that stretch reads VPGRDGSPGANGIPGTPGIPGRDG. N-linked (GlcNAc...) asparagine glycosylation is present at asparagine 186.

In terms of processing, N-glycosylated. As to expression, isoform 1 is expressed in calcified atherosclerotic plaque and chondrocyte-like cells.

It localises to the secreted. The protein localises to the extracellular space. The protein resides in the extracellular matrix. May act as a negative regulator of collagen matrix deposition. This Homo sapiens (Human) protein is Collagen triple helix repeat-containing protein 1 (CTHRC1).